The chain runs to 94 residues: Co-chaperonin GroES (94 aa).

This sequence belongs to the GroES chaperonin family. As to quaternary structure, heptamer of 7 subunits arranged in a ring. Interacts with the chaperonin GroEL.

It is found in the cytoplasm. Its function is as follows. Together with the chaperonin GroEL, plays an essential role in assisting protein folding. The GroEL-GroES system forms a nano-cage that allows encapsulation of the non-native substrate proteins and provides a physical environment optimized to promote and accelerate protein folding. GroES binds to the apical surface of the GroEL ring, thereby capping the opening of the GroEL channel. The sequence is that of Co-chaperonin GroES from Bacillus pumilus (strain SAFR-032).